The following is a 428-amino-acid chain: 2-isopropylmalate synthase 2 (428 aa).

Residues 40 to 302 enclose the Pyruvate carboxyltransferase domain; it reads PFFMDVTLRD…EVPLNFSTIY (263 aa). 4 residues coordinate Mn(2+): D49, H241, H243, and N277.

This sequence belongs to the alpha-IPM synthase/homocitrate synthase family. LeuA type 1 subfamily. Homodimer. The cofactor is Mn(2+).

The protein resides in the cytoplasm. The catalysed reaction is 3-methyl-2-oxobutanoate + acetyl-CoA + H2O = (2S)-2-isopropylmalate + CoA + H(+). It participates in amino-acid biosynthesis; L-leucine biosynthesis; L-leucine from 3-methyl-2-oxobutanoate: step 1/4. Catalyzes the condensation of the acetyl group of acetyl-CoA with 3-methyl-2-oxobutanoate (2-ketoisovalerate) to form 3-carboxy-3-hydroxy-4-methylpentanoate (2-isopropylmalate). Has high alpha-isopropylmalate synthase activity and low citramalate synthase activity. This chain is 2-isopropylmalate synthase 2, found in Leptospira interrogans serogroup Icterohaemorrhagiae serovar Lai (strain 56601).